A 211-amino-acid polypeptide reads, in one-letter code: Thiamine-phosphate synthase (211 aa).

4-amino-2-methyl-5-(diphosphooxymethyl)pyrimidine contacts are provided by residues 37–41 (QLRIK) and N69. Mg(2+)-binding residues include D70 and D89. Residue S108 participates in 4-amino-2-methyl-5-(diphosphooxymethyl)pyrimidine binding. 2-[(2R,5Z)-2-carboxy-4-methylthiazol-5(2H)-ylidene]ethyl phosphate is bound at residue 134–136 (TQT). Position 137 (K137) interacts with 4-amino-2-methyl-5-(diphosphooxymethyl)pyrimidine. Residues G166 and 186-187 (VS) each bind 2-[(2R,5Z)-2-carboxy-4-methylthiazol-5(2H)-ylidene]ethyl phosphate.

It belongs to the thiamine-phosphate synthase family. It depends on Mg(2+) as a cofactor.

It catalyses the reaction 2-[(2R,5Z)-2-carboxy-4-methylthiazol-5(2H)-ylidene]ethyl phosphate + 4-amino-2-methyl-5-(diphosphooxymethyl)pyrimidine + 2 H(+) = thiamine phosphate + CO2 + diphosphate. The catalysed reaction is 2-(2-carboxy-4-methylthiazol-5-yl)ethyl phosphate + 4-amino-2-methyl-5-(diphosphooxymethyl)pyrimidine + 2 H(+) = thiamine phosphate + CO2 + diphosphate. The enzyme catalyses 4-methyl-5-(2-phosphooxyethyl)-thiazole + 4-amino-2-methyl-5-(diphosphooxymethyl)pyrimidine + H(+) = thiamine phosphate + diphosphate. It functions in the pathway cofactor biosynthesis; thiamine diphosphate biosynthesis; thiamine phosphate from 4-amino-2-methyl-5-diphosphomethylpyrimidine and 4-methyl-5-(2-phosphoethyl)-thiazole: step 1/1. Functionally, condenses 4-methyl-5-(beta-hydroxyethyl)thiazole monophosphate (THZ-P) and 2-methyl-4-amino-5-hydroxymethyl pyrimidine pyrophosphate (HMP-PP) to form thiamine monophosphate (TMP). The chain is Thiamine-phosphate synthase from Salmonella agona (strain SL483).